The primary structure comprises 334 residues: Coiled-coil domain-containing protein 89 (334 aa).

Positions 75 to 318 form a coiled coil; the sequence is EAAQRFQSER…EAYKKHSGDL (244 aa).

It belongs to the CCDC89 family. As to quaternary structure, interacts (via C-terminus) with hey1/bc8 (via Orange domain). In adults, expressed at varying levels in different organs including the liver and brain, with highest expression in the testis.

The protein resides in the cytoplasm. Its subcellular location is the nucleus. This is Coiled-coil domain-containing protein 89 from Xenopus laevis (African clawed frog).